A 238-amino-acid chain; its full sequence is MAKRSKAYQQAAELVDRARLYAPLEAAELAKKTAKVKMDPTVEVAMRLGVDPRKADQMVRGTVNLPHGTGKTARVIVFAVGDKAAEAEAAGADAVGSEDLIERIQGGWLDFDAAIATPDQMAKVGKIARVLGPRGLMPNPKTGTVTPNVTKAVADIKGGKINFRVDKQANLHIVIGKASFDTDKLVENYAAALDEILRAKPSTSKGRYLKKVTFTTTMGPGIPVDPNRTRNLLEPAQV.

The protein belongs to the universal ribosomal protein uL1 family. In terms of assembly, part of the 50S ribosomal subunit.

In terms of biological role, binds directly to 23S rRNA. The L1 stalk is quite mobile in the ribosome, and is involved in E site tRNA release. Functionally, protein L1 is also a translational repressor protein, it controls the translation of the L11 operon by binding to its mRNA. This is Large ribosomal subunit protein uL1 from Saccharopolyspora erythraea (strain ATCC 11635 / DSM 40517 / JCM 4748 / NBRC 13426 / NCIMB 8594 / NRRL 2338).